The sequence spans 290 residues: Acetylglutamate kinase (290 aa).

Substrate is bound by residues 65-66 (GG), arginine 87, and asparagine 186.

It belongs to the acetylglutamate kinase family. ArgB subfamily.

Its subcellular location is the cytoplasm. It catalyses the reaction N-acetyl-L-glutamate + ATP = N-acetyl-L-glutamyl 5-phosphate + ADP. Its pathway is amino-acid biosynthesis; L-arginine biosynthesis; N(2)-acetyl-L-ornithine from L-glutamate: step 2/4. Functionally, catalyzes the ATP-dependent phosphorylation of N-acetyl-L-glutamate. In Mycobacterium sp. (strain JLS), this protein is Acetylglutamate kinase.